A 350-amino-acid polypeptide reads, in one-letter code: Ion-translocating oxidoreductase complex subunit D (350 aa).

4 helical membrane-spanning segments follow: residues 36–56 (FYFF…IALL), 68–88 (PIIS…IGVS), 89–109 (IPSI…IVIV), and 120–140 (IFNP…VQMT). Thr185 carries the FMN phosphoryl threonine modification. 5 consecutive transmembrane segments (helical) span residues 212–232 (GFGV…LAML), 239–259 (WQIS…GYLL), 265–285 (IGPL…FIAT), 291–311 (ATSV…VYVI), and 315–335 (GGYP…APFI).

This sequence belongs to the NqrB/RnfD family. As to quaternary structure, the complex is composed of six subunits: RnfA, RnfB, RnfC, RnfD, RnfE and RnfG. Requires FMN as cofactor.

It is found in the cell inner membrane. In terms of biological role, part of a membrane-bound complex that couples electron transfer with translocation of ions across the membrane. The polypeptide is Ion-translocating oxidoreductase complex subunit D (Shewanella piezotolerans (strain WP3 / JCM 13877)).